We begin with the raw amino-acid sequence, 414 residues long: 5-aminolevulinate synthase (414 aa).

Substrate-binding residues include R22, S133, and K152. The pyridoxal 5'-phosphate site is built by S185, H213, and T241. K244 is an active-site residue. K244 is subject to N6-(pyridoxal phosphate)lysine. T273 and T274 together coordinate pyridoxal 5'-phosphate. Substrate is bound at residue T359.

Belongs to the class-II pyridoxal-phosphate-dependent aminotransferase family. In terms of assembly, homodimer. Pyridoxal 5'-phosphate serves as cofactor.

The catalysed reaction is succinyl-CoA + glycine + H(+) = 5-aminolevulinate + CO2 + CoA. It functions in the pathway porphyrin-containing compound metabolism; protoporphyrin-IX biosynthesis; 5-aminolevulinate from glycine: step 1/1. This is 5-aminolevulinate synthase (hemA) from Rickettsia typhi (strain ATCC VR-144 / Wilmington).